The sequence spans 1364 residues: MAALPQNNLQKQLELFPAKGTSNKLSLQKTKSSVFTFKKKCSPNVSASTGFIPFQQHVLKDKNVNVKQDGTHTALPKATERNKINCFFTPVYTKSGQPPQVVALKDHVHGNDSANKPPSTEDAASKKTGINTSFGSVTSLEEWDDLDDFDTSVSPPKSHAGKGGKTPQKCKNTSPVASFKIQSISPEGPTTEKHDCAKLLYDNNEVASEPRKNLHAKTAESPDQSLVCLASVEPTNLERDMCRNTDYLGTDDLEHDQETLSQVLIEEEDDCEPDFIPPSPSDESLSSPPVLKVISAQRKHKVSSLTDVNDCENTTDHLQGQSVSTSLDSKVPSQLLTLMLEICDLVDKIPISELHVLSCGLDLKKKRDMRKRLLSNDSVFRSSPADSSTVSLTSCTSSTQNRDFNVNAPKGAESLSGSSVSKVFKFNKLAVHDIGTKESENSANSAPNFMEKIGNKTSFSFRAGGDSIMENSFNFHSSVLSNSRFNTPQNEKPISSSTCTRPYSQPIDDMDNPDLDFDIDNFDIEDLDDIHCLDSPAAPSVSSKNVPQYPTIREAQLDSRNKEKNTRNNTGDTTNPSLLSDSLLKPQIENPAHERFRGFNFPHSKEMMKIFHKKFGLHRFRTNQLEAINACLCGEDCFILMPTGGGKSLCYQLPGCISPGVTIVISPLRSLIVDQVQKLTSLDIPATYLTGDKTDAEAASIYLQLSKKDPIIKLLYVTPEKVCASTRLISTMENLYERQLLARFVIDEAHCVSQWGHDFRPDYKRLNVLRQKFQSVPMMALTATANPRVKKDILNQLKMTKPQIFTMSFNRDNLKYEVLPKKPKRVALDCVEWIKKHHPNDSGIIYCLSRHECDTMADTLQKEGLAALAYHAGLADSNRDYVQHKWINQDDCQVICATIAFGMGIDKPDVRYVIHASLPKSVEGYYQESGRAGRDGETSHCLLFYSYHDVTRIRRLIQMEKDGNSHTKQTHFNNLYSMVHYCENVVECRRMQLLSYFGENNFNPNFCKEHTQVACDNCLGKKNYKSRDVTDDVGNIVRFVQDNCSLVQGRGKGRSNNTRLTLNMMVDIFLGSKSAKIQTGLFGKGAAYSRHNAERLFRKLVLDRIIDEELYITFNDQAVAYVKMGERAQAVLNGFLKVDFQDTESASSIRKQKASVVTNTSQREEMVKKCQAELTELCKRLGKIFGVHYFNIFNTATIRRIAESLSPEPEVLLQIDGVTEDKLDKYGAELIDVLQKYSEWTLPVEDICQKSGGPANVSARRSNSDHDDESCDKSSYFSSNNKKGPKRKNSSYFGKSKKRKTGGDGQQSRSKNGNSSYARKNSTAKTSSSYISGSKTGADKRPGFMAPPMPQPNRRFLKPSYSMF.

Disordered regions lie at residues 108-131 (VHGN…TGIN) and 147-174 (DDFD…KNTS). The interval 328-377 (DSKVPSQLLTLMLEICDLVDKIPISELHVLSCGLDLKKKRDMRKRLLSND) is necessary for dimerization and homooligomerization. 3 disordered regions span residues 380-416 (FRSS…ESLS), 484-515 (RFNT…NPDL), and 535-580 (SPAA…SLLS). The span at 387 to 399 (SSTVSLTSCTSST) shows a compositional bias: low complexity. A compositionally biased stretch (polar residues) spans 484-503 (RFNTPQNEKPISSSTCTRPY). A compositionally biased stretch (basic and acidic residues) spans 555 to 566 (AQLDSRNKEKNT). Polar residues predominate over residues 567-580 (RNNTGDTTNPSLLS). ATP-binding positions include 620–624 (FRTNQ) and 644–648 (GGGKS). Positions 628–803 (INACLCGEDC…LNQLKMTKPQ (176 aa)) constitute a Helicase ATP-binding domain. The DEAH box signature appears at 747–750 (DEAH). 3' overhang DNA-binding regions lie at residues 822 to 825 (KPKR) and 849 to 851 (SRH). Residues 829 to 976 (DCVEWIKKHH…TKQTHFNNLY (148 aa)) form the Helicase C-terminal domain. Arg-934 serves as a coordination point for ATP. Residues 952–955 (RIRR) are 3' overhang DNA-binding. The Zn(2+) site is built by Cys-988, Cys-1007, Cys-1015, and Cys-1018. Residues 1046–1090 (LVQGRGKGRSNNTRLTLNMMVDIFLGSKSAKIQTGLFGKGAAYSR) form a DNA Holliday junction binding region. 3' overhang DNA-binding regions lie at residues 1061 to 1063 (TLN), 1072 to 1076 (SKSAK), and 1111 to 1117 (YITFNDQ). In terms of domain architecture, HRDC spans 1164–1244 (EEMVKKCQAE…QKYSEWTLPV (81 aa)). Positions 1179-1196 (KRLGKIFGVHYFNIFNTA) are necessary for ssDNA and DNA Holliday junction binding. Asn-1194 serves as a coordination point for ATP. The segment at 1251–1364 (SGGPANVSAR…RFLKPSYSMF (114 aa)) is disordered. Polar residues predominate over residues 1273-1282 (KSSYFSSNNK). The segment covering 1283 to 1300 (KGPKRKNSSYFGKSKKRK) has biased composition (basic residues). The Nuclear localization signal motif lies at 1285–1301 (PKRKNSSYFGKSKKRKT). Over residues 1306–1335 (QQSRSKNGNSSYARKNSTAKTSSSYISGSK) the composition is skewed to polar residues.

Belongs to the helicase family. RecQ subfamily. Monomer. Homodimer (via N-terminus). Homotetramer (via N-terminus); dimer of dimers. Homohexamer (via N-terminus). Self-association negatively regulates DNA unwinding amplitude and rate. Oligomer complexes dissociate into monomer in presence of ATP. Requires Zn(2+) as cofactor.

It is found in the nucleus. The catalysed reaction is Couples ATP hydrolysis with the unwinding of duplex DNA by translocating in the 3'-5' direction.. The enzyme catalyses ATP + H2O = ADP + phosphate + H(+). ATP-dependent DNA helicase that unwinds single- and double-stranded DNA in a 3'-5' direction. Participates in DNA replication and repair. Involved in 5'-end resection of DNA during double-strand break (DSB) repair. Negatively regulates sister chromatid exchange (SCE). Stimulates DNA 4-way junction branch migration and DNA Holliday junction dissolution. Binds single-stranded DNA (ssDNA), forked duplex DNA and DNA Holliday junction. The chain is RecQ-like DNA helicase BLM (blm) from Xenopus laevis (African clawed frog).